We begin with the raw amino-acid sequence, 64 residues long: DNA-directed RNA polymerase subunit Rpo10 (64 aa).

4 residues coordinate Zn(2+): cysteine 7, cysteine 10, cysteine 45, and cysteine 46.

This sequence belongs to the archaeal Rpo10/eukaryotic RPB10 RNA polymerase subunit family. As to quaternary structure, part of the RNA polymerase complex. The cofactor is Zn(2+).

Its subcellular location is the cytoplasm. It catalyses the reaction RNA(n) + a ribonucleoside 5'-triphosphate = RNA(n+1) + diphosphate. Its function is as follows. DNA-dependent RNA polymerase (RNAP) catalyzes the transcription of DNA into RNA using the four ribonucleoside triphosphates as substrates. The polypeptide is DNA-directed RNA polymerase subunit Rpo10 (Haloquadratum walsbyi (strain DSM 16790 / HBSQ001)).